A 255-amino-acid polypeptide reads, in one-letter code: MTTQLSVNVNKIAVLRNSRGGADPDVVQAARACIAAGAHGITVHPRPDQRHIRADDVLALSALTREHGVEFNIEGNPFAPPRGDYPGLLQLCRATRPEQVTLVPDGDGQLTSDHGFDFAQDTVQLAELITAFKRLGSRVSLFVDAGNPDIARAATLGADRIELYTGPYAHAHASGQADTALALFANAAQRASAAGLGINAGHDLSQANLGDFLAAVPGVLEVSIGHALISEALYQGLDASVRAYVDILRSGHVSA.

The 3-amino-2-oxopropyl phosphate site is built by Asn8 and Arg19. His44 acts as the Proton acceptor in catalysis. Positions 46 and 51 each coordinate 1-deoxy-D-xylulose 5-phosphate. Catalysis depends on Glu74, which acts as the Proton acceptor. Thr111 is a 1-deoxy-D-xylulose 5-phosphate binding site. Catalysis depends on His202, which acts as the Proton donor. Residues Asp203 and 225-226 (GH) each bind 3-amino-2-oxopropyl phosphate.

This sequence belongs to the PNP synthase family. In terms of assembly, homooctamer; tetramer of dimers.

It is found in the cytoplasm. The enzyme catalyses 3-amino-2-oxopropyl phosphate + 1-deoxy-D-xylulose 5-phosphate = pyridoxine 5'-phosphate + phosphate + 2 H2O + H(+). Its pathway is cofactor biosynthesis; pyridoxine 5'-phosphate biosynthesis; pyridoxine 5'-phosphate from D-erythrose 4-phosphate: step 5/5. In terms of biological role, catalyzes the complicated ring closure reaction between the two acyclic compounds 1-deoxy-D-xylulose-5-phosphate (DXP) and 3-amino-2-oxopropyl phosphate (1-amino-acetone-3-phosphate or AAP) to form pyridoxine 5'-phosphate (PNP) and inorganic phosphate. The polypeptide is Pyridoxine 5'-phosphate synthase (Xanthomonas axonopodis pv. citri (strain 306)).